Reading from the N-terminus, the 478-residue chain is MSRRLRRTKIVCTMGPSTDRDNNLEKIIAAGANVVRMNFSHGTPDDHIGRAERVRSIAKKLGKTVAILGDLQGPKIRVSTFKDGKIFLNVGDKFILDAELPKGEGTQESVGLDYKTLPQDVVPGDILLLDDGRVQLKVLSTDGAKVFTEVTVGGPLSNNKGINKLGGGLSADALTEKDKADIITAARIGVDFLAVSFPRSSADLNYARELAQQAGLNAKIVAKVERAETVANDEAMDDIILASDVIMVARGDLGVEIGDPELVGVQKKLIRRSRQLNRAVITATQMMESMISNPMPTRAEVMDVANAVLDGTDAVMLSAETAAGQYPSETVAAMASVCLGAEKMPSINVSRHRMDKEFETIEESVAMSAMYAANHMKGVAAIVTLSSTGRTPLLMSRISSGLPIFALSRNQETLNLCALYRGVTPIYHGEESRTEAGAKAAPQSLKEKGYLSTGDLVLVTQGGQGATQTNVCRTLIVE.

Substrate is bound at residue Arg-36. K(+)-binding residues include Asn-38, Ser-40, and Asp-70. 38–41 (NFSH) serves as a coordination point for ATP. ATP contacts are provided by Arg-77 and Lys-160. Mg(2+) is bound at residue Glu-225. Residues Gly-251, Asp-252, and Thr-284 each contribute to the substrate site. Asp-252 is a binding site for Mg(2+).

The protein belongs to the pyruvate kinase family. Homotetramer. Requires Mg(2+) as cofactor. The cofactor is K(+).

The catalysed reaction is pyruvate + ATP = phosphoenolpyruvate + ADP + H(+). It functions in the pathway carbohydrate degradation; glycolysis; pyruvate from D-glyceraldehyde 3-phosphate: step 5/5. Its activity is regulated as follows. Allosterically activated by AMP and by several sugar phosphates. Belongs to type II PK. The polypeptide is Pyruvate kinase (pykA) (Haemophilus influenzae (strain ATCC 51907 / DSM 11121 / KW20 / Rd)).